Reading from the N-terminus, the 332-residue chain is Phospholipase A2 inhibitor beta (332 aa).

Residues 1–23 form the signal peptide; it reads MKSSVPSLLFVSLVMSLNSYTQQ. An N-linked (GlcNAc...) asparagine glycan is attached at Asn-35. LRR repeat units lie at residues 78–101, 103–125, 127–149, 150–173, 175–197, 198–221, 223–245, and 247–269; these read LPNLQELHLSNNRLKTLPSGLFRN, PELHTLDLSTNLLEDLPPEIFTS, TSLTLLSISENRLAKLRLSWFET, LKELRILSLDNNQLKEVPISCFDK, EKLTFLDLSSNHLHRLSPDMFSG, LDNLERLSLENNPIRCIAPKSFHG, PKLSIISLKNCSLTNIITGVFQP, and NHXVLLDLSDNELTMLDPPVAIP. The N-linked (GlcNAc...) asparagine glycan is linked to Asn-232. N-linked (GlcNAc...) asparagine glycosylation occurs at Asn-272. An LRRCT domain is found at 280-331; sequence NPWACNCRMDNLLTWVKEHKIDLYSKQEIVCAFPKSFKGEEATSLHRSQICP.

Belongs to the beta-type phospholipase A2 inhibitor family. Homotrimer.

The protein localises to the secreted. Functionally, inhibits the enzymatic activity of the basic phospholipase A2 (PLA2). This Elaphe climacophora (Japanese rat snake) protein is Phospholipase A2 inhibitor beta.